Consider the following 416-residue polypeptide: Putative gustatory receptor 57a (416 aa).

Over 1 to 13 (MAVLYFFREPETV) the chain is Cytoplasmic. The chain crosses the membrane as a helical span at residues 14 to 34 (FDCAAFICILQFLMGCNGFGI). The Extracellular segment spans residues 35–48 (RRSTFRISWASRIY). The helical transmembrane segment at 49–69 (SMSVAIAAFCCLFGSLSVLLA) threads the bilayer. The Cytoplasmic segment spans residues 70–83 (EEDIRERLAKADNL). A helical membrane pass occupies residues 84-104 (VLSISALELLMSTLVFGVTVI). The Extracellular segment spans residues 105–143 (SLQVFARRHLGIYQRLAALDARLMSDFGANLNYRKMLRK). The helical transmembrane segment at 144–164 (NIAVLGIVTTIYLMAINSAAV) threads the bilayer. Over 165–171 (QVASGHR) the chain is Cytoplasmic. A helical transmembrane segment spans residues 172–192 (ALFLLFALCYTIVTGGPHFTG). Residues 193-295 (YVHMTLAEML…NEEENGSCYR (103 aa)) lie on the Extracellular side of the membrane. N-linked (GlcNAc...) asparagine glycosylation is present at N290. The chain crosses the membrane as a helical span at residues 296–316 (MLGYLALVMIPPLYKLLIAPF). The Cytoplasmic portion of the chain corresponds to 317–374 (YCDRTIYEARRCLRLVEKLDDWFPQKSSLRPLVESLMSWRIQAKIQFTSGLDVVLSRK). The helical transmembrane segment at 375–395 (VIGLFTSILVNYLLILIQFAM) threads the bilayer. At 396 to 416 (TQKMGEQIEQQKIALQEWIGF) the chain is on the extracellular side.

Belongs to the insect chemoreceptor superfamily. Gustatory receptor (GR) family. Gr57a subfamily. As to expression, in larvae, is expressed in neurons of the terminal external chemosensory organ as well as in the dorsal pharyngeal sense organ.

Its subcellular location is the cell membrane. In terms of biological role, probable gustatory receptor which mediates acceptance or avoidance behavior, depending on its substrates. The chain is Putative gustatory receptor 57a (Gr57a) from Drosophila melanogaster (Fruit fly).